Here is a 300-residue protein sequence, read N- to C-terminus: MMSGTADLAGVYAAVEESAGLLDVSCAREKVWPILAAFEDVLPTAVIAFRVATNARHEGEFDCRFTVPGSIDPYAVALDKGLTHRSGHPIETLVADVQKHCAVDSYGVDFGVVGGFKKIWVYFPGGRHESLAHLGEIPSMPPGLAATEGFFARYGLADKVDLIGVDYASKTMNVYFAASPEVVSAPTVLAMHREIGLPDPSEQMLDFCSRAFGVYTTLNWDSSKVERIAYSVKTEDPLELSARLGSKVEQFLKSVPYGIDTPKMVYAAVTAGGEEYYKLQSYYQWRTDSRLNLSYIGGRS.

This sequence belongs to the aromatic prenyltransferase family. Monomer.

It catalyses the reaction flaviolin + (2E)-geranyl diphosphate = 3-linalylflaviolin + diphosphate. Its activity is regulated as follows. Does not require magnesium or any other divalent metal ions for activity. Involved in the biosynthesis of furanonaphthoquinone I (FNQ I). Catalyzes C- and O-prenylations of different phenolic substrates. With flaviolin as substrate, catalyzes the formation of a carbon-carbon-bond between C-3 (rather than C-1) of geranyl diphosphate and C-3 of flaviolin. With 1,3-dihydroxynaphthalene and 4-hydroxybenzoate as substrates, catalyzes O-prenylations. In Streptomyces virginiae (Streptomyces cinnamonensis), this protein is Flaviolin linalyltransferase.